Reading from the N-terminus, the 335-residue chain is Partner of xrn-2 protein 1 (335 aa).

One can recognise an XRN2-binding (XTBD) domain in the interval 7-91 (VEAEKKLWES…SYVKASAAKK (85 aa)). A disordered region spans residues 95 to 119 (VKTSDLEGASDESKKVKMEKSPSPV). A compositionally biased stretch (basic and acidic residues) spans 105–114 (DESKKVKMEK).

As to quaternary structure, interacts (via N-terminus) with xrn-2; the interaction is direct.

Its subcellular location is the nucleus. The protein localises to the nucleolus. It is found in the nucleoplasm. Functionally, plays a role in maintenance of steady-state concentration and turnover of microRNAs (miRNA) by degradation of mature miRNA in complex with the exoribonuclease xrn-2. Stabilizes and enhances the accumulation and activity of the exoribonuclease xrn-2, and thus contributes to miRNA turnover. This Caenorhabditis elegans protein is Partner of xrn-2 protein 1.